We begin with the raw amino-acid sequence, 46 residues long: Pape peptide (46 aa).

The segment covering 1–10 has biased composition (low complexity); that stretch reads KQLLKEALAP. Residues 1–46 form a disordered region; it reads KQLLKEALAPEPAPKPAPEPAPEPAPEPAPEAAPEPAAAAPEAAPE. The segment covering 11 to 33 has biased composition (pro residues); sequence EPAPKPAPEPAPEPAPEPAPEAA. PAPE repeat units follow at residues 16–19, 20–23, 24–27, and 28–31; these read PAPE. Low complexity predominate over residues 34–46; the sequence is PEPAAAAPEAAPE.

Expressed by the venom gland.

The protein resides in the secreted. The polypeptide is Pape peptide (Tityus stigmurus (Brazilian scorpion)).